The primary structure comprises 219 residues: Endonuclease V (219 aa).

Mg(2+) is bound by residues aspartate 41 and aspartate 107.

The protein belongs to the endonuclease V family. The cofactor is Mg(2+).

The protein resides in the cytoplasm. The enzyme catalyses Endonucleolytic cleavage at apurinic or apyrimidinic sites to products with a 5'-phosphate.. Functionally, DNA repair enzyme involved in the repair of deaminated bases. Selectively cleaves double-stranded DNA at the second phosphodiester bond 3' to a deoxyinosine leaving behind the intact lesion on the nicked DNA. In Desulfurococcus amylolyticus (strain DSM 18924 / JCM 16383 / VKM B-2413 / 1221n) (Desulfurococcus kamchatkensis), this protein is Endonuclease V.